The chain runs to 503 residues: ATP synthase subunit alpha (503 aa).

170-177 (GDRQTGKT) is a binding site for ATP.

Belongs to the ATPase alpha/beta chains family. F-type ATPases have 2 components, CF(1) - the catalytic core - and CF(0) - the membrane proton channel. CF(1) has five subunits: alpha(3), beta(3), gamma(1), delta(1), epsilon(1). CF(0) has three main subunits: a(1), b(2) and c(9-12). The alpha and beta chains form an alternating ring which encloses part of the gamma chain. CF(1) is attached to CF(0) by a central stalk formed by the gamma and epsilon chains, while a peripheral stalk is formed by the delta and b chains.

Its subcellular location is the cell inner membrane. It carries out the reaction ATP + H2O + 4 H(+)(in) = ADP + phosphate + 5 H(+)(out). Functionally, produces ATP from ADP in the presence of a proton gradient across the membrane. The alpha chain is a regulatory subunit. The chain is ATP synthase subunit alpha from Thermotoga neapolitana (strain ATCC 49049 / DSM 4359 / NBRC 107923 / NS-E).